Consider the following 342-residue polypeptide: MAAEEEDEVEWVVESIAGFLRGPDWSIPILDFVEQKCEVFDDEEESKLTYTEIHQEYKELVEKLLEGYLKEIGINEDQFQEACTSPLAKTHTSQAILQPVLAAEDFTIFKAMMVQKNIEMQLQAIRIIQERNGVLPDCLTDGSDVVSDLEHEEMKILREVLRKSKEEYDQEEERKRKKQLSEAKTEEPTVHSSEAAIMNNSQGDGEHFAHPPSEVKMHFANQSIEPLGRKVERSETSSLPQKDLKIPGLEHASIEGPIANLSVLGTEELRQREHYLKQKRDKLMSMRKDMRTKQIQNMEQKGKPTGEVEEMTEKPEMTAEEKQTLLKRRLLAEKLKEEVINK.

Ser-85 and Ser-147 each carry phosphoserine. The stretch at 150-187 forms a coiled coil; that stretch reads EHEEMKILREVLRKSKEEYDQEEERKRKKQLSEAKTEE. The tract at residues 166–194 is disordered; it reads EEYDQEEERKRKKQLSEAKTEEPTVHSSE. The span at 179–189 shows a compositional bias: basic and acidic residues; that stretch reads QLSEAKTEEPT. A Phosphoserine modification is found at Ser-201. 2 disordered regions span residues 229–250 and 282–322; these read RKVERSETSSLPQKDLKIPGLE and KLMS…AEEK. Basic and acidic residues-rich tracts occupy residues 282 to 292 and 300 to 322; these read KLMSMRKDMRT and QKGKPTGEVEEMTEKPEMTAEEK.

The protein belongs to the CFAP36 family. In terms of assembly, interacts with ARL3. Expressed in several human tissues including brain, testis, heart, lung, pancreas and spleen (at protein level).

It localises to the nucleus. The protein localises to the cytoplasm. It is found in the cell projection. Its subcellular location is the cilium. The protein resides in the flagellum. May act as an effector for ARL3. This Homo sapiens (Human) protein is Cilia- and flagella-associated protein 36 (CFAP36).